Reading from the N-terminus, the 421-residue chain is 3-phosphoshikimate 1-carboxyvinyltransferase (421 aa).

3-phosphoshikimate-binding residues include lysine 21, serine 22, and arginine 26. Lysine 21 lines the phosphoenolpyruvate pocket. Phosphoenolpyruvate contacts are provided by glycine 93 and arginine 121. The 3-phosphoshikimate site is built by serine 166, serine 167, glutamine 168, serine 194, aspartate 310, and lysine 337. Glutamine 168 serves as a coordination point for phosphoenolpyruvate. Aspartate 310 serves as the catalytic Proton acceptor. Positions 341, 382, and 407 each coordinate phosphoenolpyruvate.

It belongs to the EPSP synthase family. In terms of assembly, monomer.

Its subcellular location is the cytoplasm. It catalyses the reaction 3-phosphoshikimate + phosphoenolpyruvate = 5-O-(1-carboxyvinyl)-3-phosphoshikimate + phosphate. Its pathway is metabolic intermediate biosynthesis; chorismate biosynthesis. Functionally, catalyzes the transfer of the enolpyruvyl moiety of phosphoenolpyruvate (PEP) to the 5-hydroxyl of shikimate-3-phosphate (S3P) to produce enolpyruvyl shikimate-3-phosphate and inorganic phosphate. The polypeptide is 3-phosphoshikimate 1-carboxyvinyltransferase (Methanoregula boonei (strain DSM 21154 / JCM 14090 / 6A8)).